Reading from the N-terminus, the 281-residue chain is Ribosomal RNA small subunit methyltransferase A (281 aa).

Histidine 25, leucine 27, glycine 52, glutamate 74, aspartate 100, and asparagine 119 together coordinate S-adenosyl-L-methionine.

The protein belongs to the class I-like SAM-binding methyltransferase superfamily. rRNA adenine N(6)-methyltransferase family. RsmA subfamily.

The protein localises to the cytoplasm. It catalyses the reaction adenosine(1518)/adenosine(1519) in 16S rRNA + 4 S-adenosyl-L-methionine = N(6)-dimethyladenosine(1518)/N(6)-dimethyladenosine(1519) in 16S rRNA + 4 S-adenosyl-L-homocysteine + 4 H(+). Specifically dimethylates two adjacent adenosines (A1518 and A1519) in the loop of a conserved hairpin near the 3'-end of 16S rRNA in the 30S particle. May play a critical role in biogenesis of 30S subunits. The sequence is that of Ribosomal RNA small subunit methyltransferase A from Paramagnetospirillum magneticum (strain ATCC 700264 / AMB-1) (Magnetospirillum magneticum).